A 424-amino-acid polypeptide reads, in one-letter code: Protein CLP1 homolog (424 aa).

ATP-binding positions include E19, K60, and 122–127 (DVGKST).

This sequence belongs to the Clp1 family. Clp1 subfamily.

It is found in the nucleus. Functionally, required for endonucleolytic cleavage during polyadenylation-dependent pre-mRNA 3'-end formation. This chain is Protein CLP1 homolog (cbc), found in Aedes aegypti (Yellowfever mosquito).